We begin with the raw amino-acid sequence, 547 residues long: Membrane protein insertase YidC (547 aa).

The helical transmembrane segment at 8–28 (LRLILAIALSFLFIALYSYFF) threads the bilayer. A compositionally biased stretch (low complexity) spans 37-50 (QTTKQETTNNHTAT). The segment at 37–62 (QTTKQETTNNHTATSPNAPNAQHFST) is disordered. Residues 51–62 (SPNAPNAQHFST) are compositionally biased toward polar residues. Helical transmembrane passes span 325–345 (VIEY…LDYL), 348–368 (FVGN…IILY), 414–434 (GANP…FFAI), 449–469 (WILW…PLLM), and 495–515 (LLPL…VLYW).

It belongs to the OXA1/ALB3/YidC family. Type 1 subfamily. In terms of assembly, interacts with the Sec translocase complex via SecD. Specifically interacts with transmembrane segments of nascent integral membrane proteins during membrane integration.

The protein resides in the cell inner membrane. Required for the insertion and/or proper folding and/or complex formation of integral membrane proteins into the membrane. Involved in integration of membrane proteins that insert both dependently and independently of the Sec translocase complex, as well as at least some lipoproteins. Aids folding of multispanning membrane proteins. This Helicobacter pylori (strain ATCC 700392 / 26695) (Campylobacter pylori) protein is Membrane protein insertase YidC.